The chain runs to 304 residues: MGDHIIRSLSVSGGIRILVCDVALLTREICRLHGASPTVSIALGRGLAGGALMGALLKPGQRLALKFEANGPLRKMIVEADSDGAVRASVANPTAEAEPLEGRWNVAGVLGRAGFLTVSKDLGLGGQPYQGTVQLCSSEIGDDLAYYLADSEQTPSAVGLGAALDEDGLISVCGGFLVQALPGVDEAERDRVTDNIASLPPLSSLLREGGTQKLLELLFDSVAYTRLETRELFFRCGCGREKVERALLSLGGAELWDMGTREGEARVTCEFCRQSYQFDADELKALAETATLTRIHEEHEHLQQ.

Intrachain disulfides connect cysteine 236–cysteine 238 and cysteine 269–cysteine 272.

This sequence belongs to the HSP33 family. Post-translationally, under oxidizing conditions two disulfide bonds are formed involving the reactive cysteines. Under reducing conditions zinc is bound to the reactive cysteines and the protein is inactive.

It localises to the cytoplasm. Functionally, redox regulated molecular chaperone. Protects both thermally unfolding and oxidatively damaged proteins from irreversible aggregation. Plays an important role in the bacterial defense system toward oxidative stress. The sequence is that of 33 kDa chaperonin from Pelobacter propionicus (strain DSM 2379 / NBRC 103807 / OttBd1).